The primary structure comprises 110 residues: Ubiquitin-related modifier 1 (110 aa).

Gly110 is modified (1-thioglycine). Residue Gly110 forms a Glycyl lysine isopeptide (Gly-Lys) (interchain with K-? in acceptor proteins) linkage.

Belongs to the URM1 family. As to quaternary structure, homodimer; homodimerization may provide an autoprotection to the highly active C-terminal residue before attacking its substrates. Forms a conjugate with the target protein AHP1. Post-translationally, C-terminal thiocarboxylation occurs in 2 steps, it is first acyl-adenylated (-COAMP) via the hesA/moeB/thiF part of UBA4, then thiocarboxylated (-COSH) via the rhodanese domain of UBA4.

It localises to the cytoplasm. The protein operates within tRNA modification; 5-methoxycarbonylmethyl-2-thiouridine-tRNA biosynthesis. Its function is as follows. Acts as a sulfur carrier required for 2-thiolation of mcm(5)S(2)U at tRNA wobble positions of cytosolic tRNA(Lys), tRNA(Glu) and tRNA(Gln). Serves as sulfur donor in tRNA 2-thiolation reaction by being thiocarboxylated (-COSH) at its C-terminus by the MOCS3 homolog UBA4. The sulfur is then transferred to tRNA to form 2-thiolation of mcm(5)S(2)U. Prior mcm(5) tRNA modification by the elongator complex is required for 2-thiolation. Also acts as a ubiquitin-like protein (UBL) that is covalently conjugated via an isopeptide bond to lysine residues of target proteins such as AHP1. Conjugation does not depend on the canonical cascade of E2 ubiquitin-conjugating enzymes and/or E3 ligases. The conjugation reaction requires a thiocarboxylated C-terminus of URM1 and a peroxidatic cysteine in the target protein, as the sulfur atom of the URM1 thiocarboxyl group is transferred to redox-active cysteine residues in the target protein. Oxidative stress specifically induces the formation of UBL-protein conjugates. Covalent modification with URM1 promotes the phase separation of a wide range of proteins into condensates like stress granules. The protein is Ubiquitin-related modifier 1 of Chaetomium thermophilum (strain DSM 1495 / CBS 144.50 / IMI 039719) (Thermochaetoides thermophila).